The primary structure comprises 84 residues: MTDKIRTLQGRVVSDKMEKSIVVAIERFVKHPIYGKFIKRTTKMHVHDENNECGIGDVVEIRECRPLSKTKSWTLVRVVEKAVL.

Belongs to the universal ribosomal protein uS17 family. As to quaternary structure, part of the 30S ribosomal subunit.

Functionally, one of the primary rRNA binding proteins, it binds specifically to the 5'-end of 16S ribosomal RNA. The sequence is that of Small ribosomal subunit protein uS17 from Salmonella typhi.